Here is a 157-residue protein sequence, read N- to C-terminus: Putative dehydration-responsive element-binding protein 2H (157 aa).

The short motif at 5–21 is the Nuclear localization signal element; sequence RKSRGTRDVAEILRKWR. The tract at residues 29-57 is disordered; the sequence is ADSCIDGGGSKPIRKAPPKRSRKGCMKGK. Residues 40-54 are compositionally biased toward basic residues; the sequence is PIRKAPPKRSRKGCM. A DNA-binding region (AP2/ERF) is located at residues 66–123; that stretch reads DYTGVRQRTWGKWVAEIREPGRGAKLWLGTFSSSYEAALAYDEASKAIYGQSARLNLP.

The protein belongs to the AP2/ERF transcription factor family. ERF subfamily.

It localises to the nucleus. Putative transcriptional activator that binds specifically to the DNA sequence 5'-[AG]CCGAC-3'. The sequence is that of Putative dehydration-responsive element-binding protein 2H (DREB2H) from Arabidopsis thaliana (Mouse-ear cress).